The following is a 144-amino-acid chain: Large ribosomal subunit protein uL15 (144 aa).

A disordered region spans residues 1-49 (MIKLECLQDPSPRKRRTKLLGRGPSSGHGKTSSRGHKGDCSRSGYKRRF).

It belongs to the universal ribosomal protein uL15 family. Part of the 50S ribosomal subunit.

Functionally, binds to the 23S rRNA. This chain is Large ribosomal subunit protein uL15, found in Chlamydia trachomatis serovar A (strain ATCC VR-571B / DSM 19440 / HAR-13).